We begin with the raw amino-acid sequence, 125 residues long: Cu-Zn superoxide dismutase-like protein (125 aa).

Cys52 and Cys102 are joined by a disulfide.

The protein belongs to the Cu-Zn superoxide dismutase family.

The protein resides in the host cytoplasm. Its function is as follows. Virion protein with no enzymatic activity. This chain is Cu-Zn superoxide dismutase-like protein, found in Bos taurus (Bovine).